The following is a 340-amino-acid chain: MIKIILAQPRGFCAGVIRAIEIVDQALDRVGAPVYVRHEIVHNRHVVDTLKAKGAVFVEELSEVPPGEVTVFSAHGVARTVQKEAEERGLPVVDATCPLVNKVHAQGRRYLSHGRTLILIGHAGHPEIEGTLGQIDGPVHLVGSAEQVDSLDIPSDTPVAFITQTTLSVDDTRSVIAALRKKFTDVIGPDTSDICYATQNRQAAVRDLCKQSDLILVVGSPNSSNSNRLREIGLEEGLPSYLIADGSEIDPVWFEGINTVGLTAGASAPEELVQSVITAIRALGPVTVEQLDGVEEKIAFRLPPTLRHLKARNAAHNNLDNKTAASEEADSLSNDTEQEA.

Residue cysteine 13 participates in [4Fe-4S] cluster binding. (2E)-4-hydroxy-3-methylbut-2-enyl diphosphate is bound by residues histidine 42 and histidine 75. Residues histidine 42 and histidine 75 each coordinate dimethylallyl diphosphate. Histidine 42 and histidine 75 together coordinate isopentenyl diphosphate. Cysteine 97 contacts [4Fe-4S] cluster. Histidine 125 is a binding site for (2E)-4-hydroxy-3-methylbut-2-enyl diphosphate. Position 125 (histidine 125) interacts with dimethylallyl diphosphate. Residue histidine 125 coordinates isopentenyl diphosphate. The Proton donor role is filled by glutamate 127. Residue threonine 165 participates in (2E)-4-hydroxy-3-methylbut-2-enyl diphosphate binding. Residue cysteine 195 participates in [4Fe-4S] cluster binding. (2E)-4-hydroxy-3-methylbut-2-enyl diphosphate is bound by residues serine 223, serine 224, asparagine 225, and serine 267. 4 residues coordinate dimethylallyl diphosphate: serine 223, serine 224, asparagine 225, and serine 267. 4 residues coordinate isopentenyl diphosphate: serine 223, serine 224, asparagine 225, and serine 267. Residues 317–340 (NNLDNKTAASEEADSLSNDTEQEA) form a disordered region. The span at 331–340 (SLSNDTEQEA) shows a compositional bias: polar residues.

The protein belongs to the IspH family. [4Fe-4S] cluster is required as a cofactor.

The enzyme catalyses isopentenyl diphosphate + 2 oxidized [2Fe-2S]-[ferredoxin] + H2O = (2E)-4-hydroxy-3-methylbut-2-enyl diphosphate + 2 reduced [2Fe-2S]-[ferredoxin] + 2 H(+). It catalyses the reaction dimethylallyl diphosphate + 2 oxidized [2Fe-2S]-[ferredoxin] + H2O = (2E)-4-hydroxy-3-methylbut-2-enyl diphosphate + 2 reduced [2Fe-2S]-[ferredoxin] + 2 H(+). Its pathway is isoprenoid biosynthesis; dimethylallyl diphosphate biosynthesis; dimethylallyl diphosphate from (2E)-4-hydroxy-3-methylbutenyl diphosphate: step 1/1. The protein operates within isoprenoid biosynthesis; isopentenyl diphosphate biosynthesis via DXP pathway; isopentenyl diphosphate from 1-deoxy-D-xylulose 5-phosphate: step 6/6. In terms of biological role, catalyzes the conversion of 1-hydroxy-2-methyl-2-(E)-butenyl 4-diphosphate (HMBPP) into a mixture of isopentenyl diphosphate (IPP) and dimethylallyl diphosphate (DMAPP). Acts in the terminal step of the DOXP/MEP pathway for isoprenoid precursor biosynthesis. This Zymomonas mobilis subsp. mobilis (strain ATCC 31821 / ZM4 / CP4) protein is 4-hydroxy-3-methylbut-2-enyl diphosphate reductase.